A 1955-amino-acid polypeptide reads, in one-letter code: 227 kDa spindle- and centromere-associated protein (1955 aa).

Coiled-coil stretches lie at residues 82–129, 152–317, 385–1747, and 1770–1813; these read KKRI…NDDV, EWAS…ELES, VRNI…LIAL, and ERIV…ERFI. 2 disordered regions span residues 1865–1896 and 1912–1955; these read PTEQ…SYTY and MTSS…TFSE. The segment covering 1878-1896 has biased composition (polar residues); sequence RTSSTIKSSEGTTRESYTY. Positions 1938-1948 are enriched in basic residues; it reads RKSRPATRKQQ.

The protein resides in the cytoplasm. It is found in the cytoskeleton. It localises to the microtubule organizing center. The protein localises to the centrosome. Its subcellular location is the chromosome. The protein resides in the centromere. It is found in the kinetochore. It localises to the spindle. Functionally, may play a role in the organization of the spindle apparatus and its interaction with the centromeres. The chain is 227 kDa spindle- and centromere-associated protein (PUMA1) from Parascaris univalens (Nematode worm).